The primary structure comprises 37 residues: Potassium channel toxin alpha-KTx 3.13 (37 aa).

Disulfide bonds link C7/C27, C13/C32, and C17/C34. At K37 the chain carries Lysine amide.

This sequence belongs to the short scorpion toxin superfamily. Potassium channel inhibitor family. Alpha-KTx 03 subfamily. In terms of tissue distribution, expressed by the venom gland.

It is found in the secreted. Blocks voltage-gated potassium channels Kv1.1/KCNA1 (IC(50)=203.15 pM), Kv1.2/KCNA2 (IC(50)=8.92 nM) from rat and human Kv1.3 KCNA3/KCNA3 (IC(50)=171 pM) potently. At 2 uM, also blocks Shaker IR and has a moderate effect on rat Kv1.6/KCNA6. The sequence is that of Potassium channel toxin alpha-KTx 3.13 from Mesobuthus eupeus (Lesser Asian scorpion).